Here is a 262-residue protein sequence, read N- to C-terminus: Ribose-5-phosphate isomerase A (262 aa).

Substrate is bound by residues 33 to 36, 89 to 92, and 102 to 105; these read TGST, DGAD, and KGGG. E111 acts as the Proton acceptor in catalysis. K129 lines the substrate pocket.

The protein belongs to the ribose 5-phosphate isomerase family. Homodimer.

The catalysed reaction is aldehydo-D-ribose 5-phosphate = D-ribulose 5-phosphate. Its pathway is carbohydrate degradation; pentose phosphate pathway; D-ribose 5-phosphate from D-ribulose 5-phosphate (non-oxidative stage): step 1/1. Its function is as follows. Catalyzes the reversible conversion of ribose-5-phosphate to ribulose 5-phosphate. The sequence is that of Ribose-5-phosphate isomerase A from Cereibacter sphaeroides (strain KD131 / KCTC 12085) (Rhodobacter sphaeroides).